Reading from the N-terminus, the 267-residue chain is MLTITAINAFNDNYIWVLRQDSQQAVYVVDPGDANVVLDYLHAQRLSLAGILITHHHRDHTGGIAALTDHVKQTTGHDLAVYGPQSEDIQGINQPIEPTLSDSLTLPFIDAPVRILSVPGHTAGHIAYLVDDALFCGDTLFSAGCGRLFEGTPSQMWQSLSLLAALPDETRVYCAHEYTLSNLKFAQTVDTDNEALNAYVEEASTLRAQGKATIPSTIGLERAINPFLRPLSPTIVNSIKNQFCDQDLTKADELTCFTLLRQWKDIF.

Residues histidine 55, histidine 57, aspartate 59, histidine 60, histidine 121, aspartate 138, and histidine 176 each contribute to the Zn(2+) site.

It belongs to the metallo-beta-lactamase superfamily. Glyoxalase II family. In terms of assembly, monomer. It depends on Zn(2+) as a cofactor.

The catalysed reaction is an S-(2-hydroxyacyl)glutathione + H2O = a 2-hydroxy carboxylate + glutathione + H(+). It functions in the pathway secondary metabolite metabolism; methylglyoxal degradation; (R)-lactate from methylglyoxal: step 2/2. Functionally, thiolesterase that catalyzes the hydrolysis of S-D-lactoyl-glutathione to form glutathione and D-lactic acid. In Shewanella sp. (strain ANA-3), this protein is Hydroxyacylglutathione hydrolase.